A 135-amino-acid polypeptide reads, in one-letter code: uncharacterized protein (135 aa).

3 helical membrane-spanning segments follow: residues 12-32 (IPIL…YNGI), 68-88 (SMIG…AKFC), and 98-118 (GILY…FYLF).

Its subcellular location is the cell membrane. This is an uncharacterized protein from Methanocaldococcus jannaschii (strain ATCC 43067 / DSM 2661 / JAL-1 / JCM 10045 / NBRC 100440) (Methanococcus jannaschii).